A 287-amino-acid polypeptide reads, in one-letter code: Probable endonuclease 4 (287 aa).

His-69, His-109, Glu-144, Asp-178, His-181, His-215, Asp-228, His-230, and Glu-260 together coordinate Zn(2+).

The protein belongs to the AP endonuclease 2 family. It depends on Zn(2+) as a cofactor.

The enzyme catalyses Endonucleolytic cleavage to 5'-phosphooligonucleotide end-products.. In terms of biological role, endonuclease IV plays a role in DNA repair. It cleaves phosphodiester bonds at apurinic or apyrimidinic (AP) sites, generating a 3'-hydroxyl group and a 5'-terminal sugar phosphate. The sequence is that of Probable endonuclease 4 from Thermotoga maritima (strain ATCC 43589 / DSM 3109 / JCM 10099 / NBRC 100826 / MSB8).